The chain runs to 285 residues: HTH-type transcriptional regulator MurR (285 aa).

In terms of domain architecture, HTH rpiR-type spans 1–77; that stretch reads MLYLTKIRNA…MALIGEYSAS (77 aa). The H-T-H motif DNA-binding region spans 37 to 56; the sequence is SRKMAKQLGISQSSIVKFAQ. Positions 128 to 268 constitute an SIS domain; sequence IIEVISKAPF…FVGLVQLNDV (141 aa).

As to quaternary structure, homotetramer.

The protein operates within amino-sugar metabolism; N-acetylmuramate degradation [regulation]. Functionally, represses the expression of the murPQ operon involved in the uptake and degradation of N-acetylmuramic acid (MurNAc). Binds to two adjacent inverted repeats within the operator region. MurNAc 6-phosphate, the substrate of MurQ, is the specific inducer that weakens binding of MurR to the operator. The sequence is that of HTH-type transcriptional regulator MurR from Shigella sonnei (strain Ss046).